Consider the following 712-residue polypeptide: Ferric reductase transmembrane component 6 (712 aa).

The signal sequence occupies residues 1 to 17 (MHRTLLFLTWLISLTKA). At 18–167 (FNIKLPHTEK…HAHAYNLDIS (150 aa)) the chain is on the vacuolar side. N89, N112, and N124 each carry an N-linked (GlcNAc...) asparagine glycan. A helical transmembrane segment spans residues 168 to 188 (SVYGAYLTYYFVIVGIIAVFF). Topologically, residues 189 to 244 (HMSHYNGLNRALFASRFVNYIRGHFVLPTFLVDKHANHFKFLNVEVFTGLMPNSLE) are cytoplasmic. Residues 245-265 (AWIIFGYTLANIIFLSISYII) traverse the membrane as a helical segment. Residues 266-287 (DPYNLIFNSHLSQFTRLLADRS) lie on the Vacuolar side of the membrane. One can recognise a Ferric oxidoreductase domain in the interval 287–411 (SGILAFTQFP…YCCWQHVKIF (125 aa)). A helical membrane pass occupies residues 288 to 308 (GILAFTQFPLIIIFTARNSFL). At 309–328 (EFLTGVKFNSFISFHKWIGR) the chain is on the cytoplasmic side. Heme contacts are provided by H323 and H337. A helical membrane pass occupies residues 329 to 349 (IMVLNATIHSLSYSLFAIINH). Residues 350–360 (AFKISNKQLYW) lie on the Vacuolar side of the membrane. A helical membrane pass occupies residues 361–381 (KFGIASITVLCVLLVLSLGIV). The Cytoplasmic segment spans residues 382 to 387 (RKRHYE). A helical membrane pass occupies residues 388 to 408 (FFLYTHIILALLFFYCCWQHV). Residues H393 and H407 each coordinate heme. Over 409–416 (KIFNGWKE) the chain is Vacuolar. Positions 412–546 (NGWKEWIVVS…EGPYGPSNLH (135 aa)) constitute an FAD-binding FR-type domain. Residues 417-437 (WIVVSLLIWGLEKLFRIWNIL) traverse the membrane as a helical segment. Over 438 to 712 (QFRFPKATLI…IEYFEEYQCW (275 aa)) the chain is Cytoplasmic. 493 to 499 (HPFTIID) lines the FAD pocket. NADP(+)-binding positions include 538-541 (GPYG) and 678-679 (CG).

This sequence belongs to the ferric reductase (FRE) family. Requires FAD as cofactor.

The protein resides in the vacuole membrane. The enzyme catalyses 2 a Fe(II)-siderophore + NADP(+) + H(+) = 2 a Fe(III)-siderophore + NADPH. Functionally, metalloreductase responsible for reducing vacuolar iron and copper prior to transport into the cytosol. Catalyzes the reduction of Fe(3+) to Fe(2+) and Cu(2+) to Cu(+), respectively, which can then be transported by the respective vacuolar efflux systems to the cytosol. This is Ferric reductase transmembrane component 6 (FRE6) from Saccharomyces cerevisiae (strain ATCC 204508 / S288c) (Baker's yeast).